Reading from the N-terminus, the 345-residue chain is Acetylserotonin O-methyltransferase (345 aa).

S-adenosyl-L-methionine-binding positions include Y147, W164, D210, 235–237 (GDF), and R252. H255 (proton donor/acceptor) is an active-site residue. Residues D256, N302, and Q306 each coordinate substrate.

The protein belongs to the class I-like SAM-binding methyltransferase superfamily. Cation-independent O-methyltransferase family. Homodimer. As to expression, expressed in the pineal gland (at protein level). In the retina, very low expression is found at the mRNA level, and not at the protein level.

The catalysed reaction is N-acetylserotonin + S-adenosyl-L-methionine = melatonin + S-adenosyl-L-homocysteine + H(+). It functions in the pathway aromatic compound metabolism; melatonin biosynthesis; melatonin from serotonin: step 1/2. Catalyzes the transfer of a methyl group onto N-acetylserotonin, producing melatonin (N-acetyl-5-methoxytryptamine). Its function is as follows. Does not show Acetylserotonin O-methyltransferase activity. This Homo sapiens (Human) protein is Acetylserotonin O-methyltransferase (ASMT).